The sequence spans 359 residues: Alpha-ketoglutarate-dependent dioxygenase cnsM (359 aa).

Residue His120 coordinates substrate. The Fe cation site is built by His158 and Asp160. Thr186 provides a ligand contact to 2-oxoglutarate. Position 311 (His311) interacts with Fe cation. 2-oxoglutarate-binding residues include Arg323 and Arg327. Arg327 provides a ligand contact to substrate.

This sequence belongs to the TfdA dioxygenase family. Fe(2+) serves as cofactor.

The protein operates within alkaloid biosynthesis. Functionally, alpha-ketoglutarate-dependent dioxygenase; part of the gene cluster that mediates the biosynthesis of communesins, a prominent class of indole alkaloids with great potential as pharmaceuticals. Communesins are biosynthesized by the coupling of tryptamine and aurantioclavine, two building blocks derived from L-tryptophan. The L-tryptophan decarboxylase cnsB converts L-tryptophan to tryptamine, whereas the tryptophan dimethylallyltransferase cnsF converts L-tryptophan to 4-dimethylallyl tryptophan which is further transformed to aurantioclavine by the aurantioclavine synthase cnsA, probably aided by the catalase cnsD. The cytochrome P450 monooxygenase cnsC catalyzes the heterodimeric coupling between the two different indole moieties, tryptamine and aurantioclavine, to construct vicinal quaternary stereocenters and yield the heptacyclic communesin scaffold. The O-methyltransferase cnsE then methylates the communesin scaffold to produce communesin K, the simplest characterized communesin that contains the heptacyclic core. The dioxygenase cnsJ converts communesin K into communesin I. Acylation to introduce the hexadienyl group at position N16 of communesin I by the acyltransferase cnsK leads to the production of communesin B. The hexadienyl group is produced by the highly reducing polyketide synthase cnsI, before being hydrolytically removed from cnsI by the serine hydrolase cnsH, converted into hexadienyl-CoA by the CoA ligase cnsG, and then transferred to communesin I by cnsK. Surprisingly, cnsK may also be a promiscuous acyltransferase that can tolerate a range of acyl groups, including acetyl-, propionyl-, and butyryl-CoA, which lead to communesins A, G and H respectively. The roles of the alpha-ketoglutarate-dependent dioxygenases cnsM and cnsP have still to be determined. The sequence is that of Alpha-ketoglutarate-dependent dioxygenase cnsM from Penicillium expansum (Blue mold rot fungus).